The chain runs to 2128 residues: Non-reducing polyketide synthase albA (2128 aa).

The interval 8–244 is N-terminal acylcarrier protein transacylase domain (SAT); that stretch reads YLFGDQTSDI…VKAPIHGPYH (237 aa). The 432-residue stretch at 375-806 folds into the Ketosynthase family 3 (KS3) domain; that stretch reads NSKIAIIGMS…GGNTALLLED (432 aa). Active-site for beta-ketoacyl synthase activity residues include C547, H682, and H724. The interval 912-1232 is malonyl-CoA:ACP transacylase (MAT) domain; the sequence is FVFTGQGAQY…LASLHLAGID (321 aa). S1001 serves as the catalytic For acyl/malonyl transferase activity. The segment at 1286–1425 is N-terminal hotdog fold; the sequence is HEYLTTAAQK…CTVRFFDCAA (140 aa). The PKS/mFAS DH domain maps to 1286–1598; sequence HEYLTTAAQK…FQALSRKILD (313 aa). Positions 1290 to 1603 are product template (PT) domain; it reads TTAAQKVIET…RKILDTVLPP (314 aa). The active-site Proton acceptor; for dehydratase activity is the H1326. The tract at residues 1452 to 1598 is C-terminal hotdog fold; it reads DAHRLGRGMV…FQALSRKILD (147 aa). The Proton donor; for dehydratase activity role is filled by D1511. The 78-residue stretch at 1618-1695 folds into the Carrier 1 domain; it reads PSAPSLVKRA…DFKQFLAPMS (78 aa). S1655 is subject to O-(pantetheine 4'-phosphoryl)serine. The interval 1695 to 1740 is disordered; that stretch reads SQGEASDGSTSDPESSSSFNGGSSTDESSAGSPVSSPPNEKVTQVE. Residues 1700–1723 show a composition bias toward low complexity; it reads SDGSTSDPESSSSFNGGSSTDESS. Polar residues predominate over residues 1724–1740; sequence AGSPVSSPPNEKVTQVE. The Carrier 2 domain maps to 1739 to 1816; it reads VEQHATIKEI…DVEDALGLKP (78 aa). Position 1776 is an O-(pantetheine 4'-phosphoryl)serine (S1776). A claisen cyclase domain region spans residues 1854 to 2126; the sequence is SPHPRSTSIL…ELGSFIGNAM (273 aa). S1944 acts as the For Claisen cyclase activity in catalysis.

It catalyses the reaction 6 malonyl-CoA + acetyl-CoA + 6 H(+) = naphtopyrone YWA1 + 6 CO2 + 7 CoA + H2O. It participates in secondary metabolite biosynthesis. Functionally, non-reducing polyketide synthase; part of the gene cluster that mediates the biosynthesis of aurasperone B, a dimeric gamma-naphthopyrone. The first step in the biosynthesis of aurasperone B is the production of gamma-naphthopyrone precursor YWA1 by the non-reducing polyketide synthase albA, via condensation of one acetyl-CoA starter unit with 6 malonyl-CoA units. YWA1 is then methylated by aunE at position C-6 to yield foncesin which is further methylated at position C-8 by aunD to produce fonsecin B. A key enzyme in the biosynthetic pathway is the cytochrome P450 monooxygenase aunB which catalyzes the oxidative dimerization of fonsecin B to aurasperone B. AunB also catalyzes the oxidative dimerization of rubrofusarin B into aurasperone A. This chain is Non-reducing polyketide synthase albA, found in Aspergillus niger (strain ATCC 1015 / CBS 113.46 / FGSC A1144 / LSHB Ac4 / NCTC 3858a / NRRL 328 / USDA 3528.7).